The sequence spans 376 residues: Putative glutamate--cysteine ligase 2-1 (376 aa).

Belongs to the glutamate--cysteine ligase type 2 family. YbdK subfamily.

The catalysed reaction is L-cysteine + L-glutamate + ATP = gamma-L-glutamyl-L-cysteine + ADP + phosphate + H(+). Its function is as follows. ATP-dependent carboxylate-amine ligase which exhibits weak glutamate--cysteine ligase activity. This chain is Putative glutamate--cysteine ligase 2-1, found in Mycolicibacterium smegmatis (strain ATCC 700084 / mc(2)155) (Mycobacterium smegmatis).